Here is a 300-residue protein sequence, read N- to C-terminus: Secreted mono- and diacylglycerol lipase LIP4 (300 aa).

The signal sequence occupies residues 1 to 16; it reads MRFLAFLLCLVPLALC. A disulfide bridge connects residues Cys-54 and Cys-293. Ser-167 serves as the catalytic Nucleophile. Residue Asp-224 is part of the active site.

It belongs to the AB hydrolase superfamily. Lipase family. Class 3 subfamily.

The protein resides in the secreted. The enzyme catalyses a monoacylglycerol + H2O = glycerol + a fatty acid + H(+). The catalysed reaction is a diacylglycerol + H2O = a monoacylglycerol + a fatty acid + H(+). Its function is as follows. Secreted lipase involved in Dandruff and seborrheic dermatitis (D/SD) probably via lipase-mediated breakdown of sebaceous lipids and release of irritating free fatty acids. Shows activity against monoglyceride and diglyceride substrates. Due to an absence of fatty acid synthase genes in Malassezia species, secretory lipases are essential for the yeast to generate free fatty acids from degradation of sebum and assimilate them as lipid sources for growth. Plays an essential role at the pathogen-host interface during disease progression. This Malassezia restricta (Seborrheic dermatitis infection agent) protein is Secreted mono- and diacylglycerol lipase LIP4.